A 239-amino-acid chain; its full sequence is tRNA (guanine-N(7)-)-methyltransferase (239 aa).

Positions 69, 94, 121, and 144 each coordinate S-adenosyl-L-methionine. Aspartate 144 is an active-site residue. Position 148 (lysine 148) interacts with substrate. Positions 150–155 are interaction with RNA; sequence RHNKRR. Substrate is bound by residues aspartate 180 and 217–220; that span reads TKFE.

This sequence belongs to the class I-like SAM-binding methyltransferase superfamily. TrmB family. In terms of assembly, monomer.

The enzyme catalyses guanosine(46) in tRNA + S-adenosyl-L-methionine = N(7)-methylguanosine(46) in tRNA + S-adenosyl-L-homocysteine. Its pathway is tRNA modification; N(7)-methylguanine-tRNA biosynthesis. In terms of biological role, catalyzes the formation of N(7)-methylguanine at position 46 (m7G46) in tRNA. The sequence is that of tRNA (guanine-N(7)-)-methyltransferase from Yersinia pseudotuberculosis serotype O:1b (strain IP 31758).